A 97-amino-acid polypeptide reads, in one-letter code: Kininogen-1 (97 aa).

A signal peptide spans 1–23; that stretch reads MRLWFCLSFLIILCVEHFPGTLA.

It belongs to the bradykinin-related peptide family. Expressed by the skin glands.

The protein resides in the secreted. Functionally, [Ala3,Thr6]bradykinin: produces in vitro relaxation of rat arterial smooth muscle and constriction of intestinal smooth muscle. Possesses insulin-releasing activity. May target bradykinin receptors (BDKRB). The protein is Kininogen-1 of Bombina variegata (Yellow-bellied toad).